The chain runs to 208 residues: Thymidylate kinase (208 aa).

Residue 10–17 (GGEGAGKS) coordinates ATP.

Belongs to the thymidylate kinase family.

The catalysed reaction is dTMP + ATP = dTDP + ADP. Functionally, phosphorylation of dTMP to form dTDP in both de novo and salvage pathways of dTTP synthesis. The chain is Thymidylate kinase from Alcanivorax borkumensis (strain ATCC 700651 / DSM 11573 / NCIMB 13689 / SK2).